The sequence spans 60 residues: Large ribosomal subunit protein uL30 (60 aa).

It belongs to the universal ribosomal protein uL30 family. In terms of assembly, part of the 50S ribosomal subunit.

This Paraburkholderia phytofirmans (strain DSM 17436 / LMG 22146 / PsJN) (Burkholderia phytofirmans) protein is Large ribosomal subunit protein uL30.